Reading from the N-terminus, the 369-residue chain is RAB6-interacting golgin (369 aa).

The tract at residues 1-128 is disordered; sequence MAQGWAGFSE…HNNVEILPPK (128 aa). Over residues 11 to 27 the composition is skewed to basic and acidic residues; sequence EELRRLKQTKDPFEPQR. 2 stretches are compositionally biased toward polar residues: residues 46–61 and 82–93; these read EQSQ…TSLL and SPTLPSHFTLTS. Residues 106 to 120 show a composition bias toward basic and acidic residues; that stretch reads QPKELGLENSHDGHN. A coiled-coil region spans residues 145–297; that stretch reads RWEVLQQEQR…EVERLLHEQE (153 aa). The necessary for interaction with RCHY1 stretch occupies residues 188-369; sequence IQKELQALDD…GNDISAALAT (182 aa). The disordered stretch occupies residues 334 to 369; sequence VSPKVDDQCGNSSSIPFLSPNCPNQEGNDISAALAT. The span at 342-361 shows a compositional bias: polar residues; sequence CGNSSSIPFLSPNCPNQEGN.

Belongs to the GORAB family. Interacts with SCYL1. Interacts with RCHY1 and RAB6A/RAB6.

The protein localises to the cytoplasm. The protein resides in the golgi apparatus. The polypeptide is RAB6-interacting golgin (GORAB) (Homo sapiens (Human)).